Here is a 329-residue protein sequence, read N- to C-terminus: D-alanine--D-alanine ligase (329 aa).

One can recognise an ATP-grasp domain in the interval 121–327 (KLWYDALDIP…FSEFLAQCVT (207 aa)). ATP is bound at residue 151-206 (AFGHWGSIFVKAARQGSSVGCYKVTTEDQIAPAIEAAFGFSEQVLVEQAVKPRELE). Residues Asp-281, Glu-294, and Asn-296 each contribute to the Mg(2+) site.

This sequence belongs to the D-alanine--D-alanine ligase family. The cofactor is Mg(2+). Mn(2+) serves as cofactor.

It is found in the cytoplasm. It carries out the reaction 2 D-alanine + ATP = D-alanyl-D-alanine + ADP + phosphate + H(+). The protein operates within cell wall biogenesis; peptidoglycan biosynthesis. Cell wall formation. The polypeptide is D-alanine--D-alanine ligase (Vibrio cholerae serotype O1 (strain ATCC 39541 / Classical Ogawa 395 / O395)).